A 388-amino-acid chain; its full sequence is Succinate--CoA ligase [ADP-forming] subunit beta (388 aa).

Residues 9–244 (KQLFAEYGLP…PSQEDSREAE (236 aa)) enclose the ATP-grasp domain. ATP-binding positions include Lys-46, 53–55 (GRG), Glu-99, Thr-102, and Glu-107. Positions 199 and 213 each coordinate Mg(2+). Substrate contacts are provided by residues Asn-264 and 321–323 (GIV).

The protein belongs to the succinate/malate CoA ligase beta subunit family. Heterotetramer of two alpha and two beta subunits. Requires Mg(2+) as cofactor.

The enzyme catalyses succinate + ATP + CoA = succinyl-CoA + ADP + phosphate. It carries out the reaction GTP + succinate + CoA = succinyl-CoA + GDP + phosphate. The protein operates within carbohydrate metabolism; tricarboxylic acid cycle; succinate from succinyl-CoA (ligase route): step 1/1. Functionally, succinyl-CoA synthetase functions in the citric acid cycle (TCA), coupling the hydrolysis of succinyl-CoA to the synthesis of either ATP or GTP and thus represents the only step of substrate-level phosphorylation in the TCA. The beta subunit provides nucleotide specificity of the enzyme and binds the substrate succinate, while the binding sites for coenzyme A and phosphate are found in the alpha subunit. This Marinobacter nauticus (strain ATCC 700491 / DSM 11845 / VT8) (Marinobacter aquaeolei) protein is Succinate--CoA ligase [ADP-forming] subunit beta.